Here is a 425-residue protein sequence, read N- to C-terminus: UDP-N-acetylglucosamine 1-carboxyvinyltransferase (425 aa).

23–24 (KN) lines the phosphoenolpyruvate pocket. Arginine 100 contributes to the UDP-N-acetyl-alpha-D-glucosamine binding site. The active-site Proton donor is cysteine 124. Cysteine 124 is modified (2-(S-cysteinyl)pyruvic acid O-phosphothioketal). UDP-N-acetyl-alpha-D-glucosamine-binding residues include aspartate 313 and isoleucine 335.

This sequence belongs to the EPSP synthase family. MurA subfamily.

The protein localises to the cytoplasm. The catalysed reaction is phosphoenolpyruvate + UDP-N-acetyl-alpha-D-glucosamine = UDP-N-acetyl-3-O-(1-carboxyvinyl)-alpha-D-glucosamine + phosphate. The protein operates within cell wall biogenesis; peptidoglycan biosynthesis. In terms of biological role, cell wall formation. Adds enolpyruvyl to UDP-N-acetylglucosamine. This is UDP-N-acetylglucosamine 1-carboxyvinyltransferase from Wolbachia pipientis wMel.